A 375-amino-acid polypeptide reads, in one-letter code: E3 ubiquitin-protein ligase RNF34 (375 aa).

Residues 56 to 107 (EGPNIVCKACGLSFSVFRKKHVCCDCKKDFCSVCSVLQENLRRCSTCHLLQE) form an FYVE-type zinc finger. One can recognise an SAP 1 domain in the interval 115–134 (LMRLKVKDLRQYLILRNIPI). Residue serine 169 is modified to Phosphoserine. Residues 202–250 (RTLGSGALAQEPSEIASANTEDDEDDDDDDDDDDDDDEENLEDRTPGLT) are disordered. Residues 221–242 (TEDDEDDDDDDDDDDDDDEENL) are compositionally biased toward acidic residues. Phosphoserine occurs at positions 257 and 259. The SAP 2 domain maps to 267–281 (VEGMSVRQLKEILAR). An RING-type zinc finger spans residues 328-363 (CRICMDAVIDCVLLECGHMVTCTKCGKRMSECPICR).

In terms of assembly, interacts with CASP8 and CASP10. Interacts with p53/TP53; involved in p53/TP53 ubiquitination. Interacts (via RING-type zinc finger) with MDM2; the interaction stabilizes MDM2. Interacts (via RING-type zinc finger) with PPARGC1A. Interacts with NOD1. In terms of processing, autoubiquitinated (in vitro). Post-translationally, proteolytically cleaved by caspases upon induction of apoptosis by TNF.

The protein resides in the cell membrane. It localises to the endomembrane system. Its subcellular location is the nucleus. The protein localises to the nucleus speckle. It is found in the cytoplasm. The protein resides in the cytosol. It catalyses the reaction S-ubiquitinyl-[E2 ubiquitin-conjugating enzyme]-L-cysteine + [acceptor protein]-L-lysine = [E2 ubiquitin-conjugating enzyme]-L-cysteine + N(6)-ubiquitinyl-[acceptor protein]-L-lysine.. Its pathway is protein modification; protein ubiquitination. Its function is as follows. E3 ubiquitin-protein ligase that regulates several biological processes through the ubiquitin-mediated proteasomal degradation of various target proteins. Ubiquitinates the caspases CASP8 and CASP10, promoting their proteasomal degradation, to negatively regulate cell death downstream of death domain receptors in the extrinsic pathway of apoptosis. May mediate 'Lys-48'-linked polyubiquitination of RIPK1 and its subsequent proteasomal degradation thereby indirectly regulating the tumor necrosis factor-mediated signaling pathway. Negatively regulates p53/TP53 through its direct ubiquitination and targeting to proteasomal degradation. Indirectly, may also negatively regulate p53/TP53 through ubiquitination and degradation of SFN. Mediates PPARGC1A proteasomal degradation probably through ubiquitination thereby indirectly regulating the metabolism of brown fat cells. Possibly involved in innate immunity, through 'Lys-48'-linked polyubiquitination of NOD1 and its subsequent proteasomal degradation. The polypeptide is E3 ubiquitin-protein ligase RNF34 (RNF34) (Bos taurus (Bovine)).